The following is a 727-amino-acid chain: Protein edg-1 (727 aa).

Positions F703–D727 are disordered.

In terms of assembly, may interact with deps-1 and prg-1.

The protein resides in the cytoplasmic granule. Plays a role in regulating deps-1 cluster formation in the germline. The sequence is that of Protein edg-1 from Caenorhabditis elegans.